Reading from the N-terminus, the 818-residue chain is Sodium/hydrogen exchanger 1 (818 aa).

The Extracellular portion of the chain corresponds to 1 to 98 (MLLWSGICGL…FPVLGIDYTH (98 aa)). The interval 39 to 76 (PSPTASTIRGSEPPRERSIGDVTTAPPELAPESRPVNH) is disordered. The N-linked (GlcNAc...) asparagine glycan is linked to asparagine 75. Residues 99–121 (VRTPFEISLWILLACLMKIGFHV) form a helical membrane-spanning segment. The Cytoplasmic portion of the chain corresponds to 122-130 (IPTISSIVP). Residues 131–148 (ESCLLIVVGLLVGGLIKA) form a helical membrane-spanning segment. At 149–158 (VGETPPFLQS) the chain is on the extracellular side. The chain crosses the membrane as a helical span at residues 159-176 (EVFFLFLLPPIILDAGYF). Topologically, residues 177–186 (LPLRQFTENL) are cytoplasmic. A helical membrane pass occupies residues 187 to 215 (GTILIFAVVGTLWNAFFLGGLMYAVCLVG). Residues 216–222 (GEQINNI) are Extracellular-facing. A helical membrane pass occupies residues 223–249 (GLLDNLLFGSIISAVDPVAVLAVFEEI). At 250-252 (HIN) the chain is on the cytoplasmic side. A helical transmembrane segment spans residues 253 to 283 (ELLHILVFGESLLNDAVTVVLYHLFEEFANY). At 284–287 (DRVG) the chain is on the extracellular side. A helical membrane pass occupies residues 288–322 (IVDIVLGFLSFFVVSLGGVFVGVVYGVIAAFTSRF). At 323 to 328 (TSHIRV) the chain is on the cytoplasmic side. A helical transmembrane segment spans residues 329-341 (IEPLFVFLYSYMA). The Extracellular portion of the chain corresponds to 342 to 350 (YLSAELFHL). Residues 351 to 371 (SGIMALIASGVVMRPYVEANI) traverse the membrane as a helical segment. The Cytoplasmic segment spans residues 372–373 (SH). A helical membrane pass occupies residues 374–404 (KSHTTIKYFLKMWSSVSETLIFIFLGVSTVA). At 405 to 410 (GSHHWN) the chain is on the extracellular side. A helical membrane pass occupies residues 411–438 (WTFVISTLLFCLIARVLGVLGLTWFINK). Residues 439–444 (FRIVKL) lie on the Cytoplasmic side of the membrane. The chain crosses the membrane as a helical span at residues 445 to 469 (TPKDQFIIAYGGLRGAIAFSLGHLL). Residues 470 to 475 (DKNHFP) lie on the Extracellular side of the membrane. A helical transmembrane segment spans residues 476 to 505 (MCDLFLTAIITVIFFTVFVQGMTIRPLVDL). An interaction with TESC region spans residues 503 to 545 (VDLLAVKKKQETKRSINEEIHTQFLDHLLTGIEDICGHYGHHH). The Cytoplasmic portion of the chain corresponds to 506 to 818 (LAVKKKQETK…EGEPFIPKGQ (313 aa)). Residues 509–516 (KKKQETKR) form a PI(4,5)P2-binding region region. Residues 515–545 (KRSINEEIHTQFLDHLLTGIEDICGHYGHHH) are interaction with CHP2. Residues 540-545 (HYGHHH) are confers pH-dependent PI(4,5)P2 binding. The segment at 552–560 (RFNKKYVKK) is PI(4,5)P2-binding region. Serine 599 and serine 602 each carry phosphoserine. The residue at position 603 (threonine 603) is a Phosphothreonine. Residues serine 605 and serine 648 each carry the phosphoserine modification. The tract at residues 633 to 818 (KILRNNLQKT…EGEPFIPKGQ (186 aa)) is interaction with TESC. The interval 633-818 (KILRNNLQKT…EGEPFIPKGQ (186 aa)) is interaction with CALM1. Residues 684-687 (LTVP) form an interaction with PPP3CA region. Phosphoserine occurs at positions 693, 697, and 703. Positions 715 to 720 (PVITID) are interaction with PPP3CA. Residues serine 723, serine 726, and serine 729 each carry the phosphoserine modification. Positions 739 to 818 (GKVLGLSREP…EGEPFIPKGQ (80 aa)) are disordered. Residues threonine 752 and threonine 782 each carry the phosphothreonine modification. The span at 785-794 (PSDSPSSQRI) shows a compositional bias: polar residues. A phosphoserine mark is found at serine 788, serine 790, and serine 799.

The protein belongs to the monovalent cation:proton antiporter 1 (CPA1) transporter (TC 2.A.36) family. Homodimer; dimerization is crucial for its function. Oligomer. Interacts with CALM in a calcium-dependent manner. Interacts with TESC. Interacts (via the juxtamembrane region of the cytoplasmic C-terminal domain) with CHP1; the interaction occurs at the plasma membrane in a calcium-dependent manner. Interacts with CHP2; the interaction occurs in a calcium-dependent manner. Interacts with EZR; regulates the cytoskeletal interactions of SLC9A1 and promotes stress fiber formation. Ubiquitinated, leading to its degradation by the proteasome. Ubiquitination is reduced by CHP1. In terms of processing, O-glycosylated. Post-translationally, palmitoylated; may play a major role in SLC9A1 regulation. Phosphorylation at Thr-782 increases SLC9A1 activity. Specifically dephosphorylated at Thr-782 by PPP3CA that negatively regulates SLC9A1 activity. Phosphorylation at Ser-648 by AKT1 reduces SLC9A1 binding to CALM1.

It is found in the cell membrane. The protein resides in the basolateral cell membrane. The catalysed reaction is Na(+)(in) + H(+)(out) = Na(+)(out) + H(+)(in). It carries out the reaction Li(+)(out) + H(+)(in) = Li(+)(in) + H(+)(out). The enzyme catalyses Li(+)(in) + Na(+)(out) = Li(+)(out) + Na(+)(in). Activated at acidic pHs. Inhibited by cariporide and eniporide. Inhibited by amiloride and 5-amino-substituted derivatives. Phosphatidylinositol 4,5-bisphosphate (PI(4,5)P2) and phosphatidylinositol 3,4,5-trisphosphate (PI(3,4,5)P3) bind and differentially regulate SLC9A1 activity. Electroneutral Na(+) /H(+) antiporter that extrudes Na(+) in exchange for external protons driven by the inward sodium ion chemical gradient, protecting cells from acidification that occurs from metabolism. Exchanges intracellular H(+) ions for extracellular Na(+) in 1:1 stoichiometry. Plays a key role in maintening intracellular pH neutral and cell volume, and thus is important for cell growth, proliferation, migration and survival. In addition, can transport lithium Li(+) and also functions as a Na(+)/Li(+) antiporter. SLC9A1 also functions in membrane anchoring and organization of scaffolding complexes that coordinate signaling inputs. In Sus scrofa (Pig), this protein is Sodium/hydrogen exchanger 1 (SLC9A1).